We begin with the raw amino-acid sequence, 114 residues long: Beta-microseminoprotein J1 (114 aa).

The first 20 residues, 1 to 20 (MNVLLGGLVIFATFVTLCNA), serve as a signal peptide directing secretion. Cystine bridges form between cysteine 22/cysteine 70, cysteine 38/cysteine 62, cysteine 57/cysteine 93, cysteine 60/cysteine 69, and cysteine 84/cysteine 107.

It belongs to the beta-microseminoprotein family.

It is found in the secreted. This Saguinus oedipus (Cotton-top tamarin) protein is Beta-microseminoprotein J1 (MSPJ).